The following is a 473-amino-acid chain: Photosystem II CP43 reaction center protein (473 aa).

Residues 1–14 constitute a propeptide that is removed on maturation; that stretch reads MKILYSQRRFYPVE. Residue T15 is modified to N-acetylthreonine. T15 carries the post-translational modification Phosphothreonine. 5 helical membrane-spanning segments follow: residues 69–93, 134–155, 178–200, 255–275, and 291–312; these read LFEV…PHLA, LIGP…KDKN, KALY…RKIT, KPFA…LSYS, and WFNN…ASQA. E367 contacts [CaMn4O5] cluster. Residues 447-471 form a helical membrane-spanning segment; the sequence is RARAAAAGFEKGIDRDFEPVLSMTP.

This sequence belongs to the PsbB/PsbC family. PsbC subfamily. As to quaternary structure, PSII is composed of 1 copy each of membrane proteins PsbA, PsbB, PsbC, PsbD, PsbE, PsbF, PsbH, PsbI, PsbJ, PsbK, PsbL, PsbM, PsbT, PsbX, PsbY, PsbZ, Psb30/Ycf12, at least 3 peripheral proteins of the oxygen-evolving complex and a large number of cofactors. It forms dimeric complexes. Binds multiple chlorophylls and provides some of the ligands for the Ca-4Mn-5O cluster of the oxygen-evolving complex. It may also provide a ligand for a Cl- that is required for oxygen evolution. PSII binds additional chlorophylls, carotenoids and specific lipids. serves as cofactor. Phosphorylated on threonine residue(s).

The protein resides in the plastid. It is found in the chloroplast thylakoid membrane. One of the components of the core complex of photosystem II (PSII). It binds chlorophyll and helps catalyze the primary light-induced photochemical processes of PSII. PSII is a light-driven water:plastoquinone oxidoreductase, using light energy to abstract electrons from H(2)O, generating O(2) and a proton gradient subsequently used for ATP formation. This chain is Photosystem II CP43 reaction center protein, found in Marchantia polymorpha (Common liverwort).